The following is a 939-amino-acid chain: Translation initiation factor IF-2 (939 aa).

The segment at 48 to 355 (KFAPAPKVEN…KPEKKEKEEE (308 aa)) is disordered. Positions 79 to 93 (QQNQAPKQPQQGTQN) are enriched in low complexity. A compositionally biased stretch (basic and acidic residues) spans 114–130 (SRDKNSRRDNNNRDGQR). A compositionally biased stretch (low complexity) spans 131–257 (DNNGGYRNND…NNDRNNNGGF (127 aa)). Residues 287 to 355 (RNNDRRDSAP…KPEKKEKEEE (69 aa)) are compositionally biased toward basic and acidic residues. One can recognise a tr-type G domain in the interval 440–609 (PRPPVVCVMG…LLTAEVNELK (170 aa)). Residues 449–456 (GHVDHGKT) form a G1 region. 449-456 (GHVDHGKT) serves as a coordination point for GTP. The G2 stretch occupies residues 474–478 (GITQK). Residues 495-498 (DTPG) form a G3 region. Residues 495–499 (DTPGH) and 549–552 (NKID) each bind GTP. The G4 stretch occupies residues 549-552 (NKID). The tract at residues 585–587 (SAH) is G5.

This sequence belongs to the TRAFAC class translation factor GTPase superfamily. Classic translation factor GTPase family. IF-2 subfamily.

The protein resides in the cytoplasm. Functionally, one of the essential components for the initiation of protein synthesis. Protects formylmethionyl-tRNA from spontaneous hydrolysis and promotes its binding to the 30S ribosomal subunits. Also involved in the hydrolysis of GTP during the formation of the 70S ribosomal complex. This chain is Translation initiation factor IF-2, found in Lachnospira eligens (strain ATCC 27750 / DSM 3376 / VPI C15-48 / C15-B4) (Eubacterium eligens).